An 842-amino-acid chain; its full sequence is uncharacterized protein (842 aa).

Disordered stretches follow at residues methionine 1 to glutamate 20 and asparagine 142 to serine 209. A uDENN FNIP1/2-type domain is found at threonine 35–leucine 422. Positions alanine 183–serine 209 are enriched in polar residues. The region spanning alanine 430–glutamate 772 is the cDENN FNIP1/2-type domain. Phosphoserine is present on residues serine 573 and serine 590. In terms of domain architecture, dDENN FNIP1/2-type spans tyrosine 777–cysteine 842.

The protein resides in the cytoplasm. This is an uncharacterized protein from Schizosaccharomyces pombe (strain 972 / ATCC 24843) (Fission yeast).